Reading from the N-terminus, the 226-residue chain is HTH-type transcriptional regulator TcmR (226 aa).

The segment covering 1–16 (MDSAETDTPSTRSTPN) has biased composition (polar residues). Residues 1–25 (MDSAETDTPSTRSTPNGPGLRQRKL) form a disordered region. The HTH tetR-type domain occupies 26–86 (RRTRDQLIRE…TPISAIDEAF (61 aa)). The H-T-H motif DNA-binding region spans 49–68 (TVEQIAEAVEVHPRTFFRHF).

It participates in antibiotic biosynthesis; tetracenomycin C biosynthesis. In terms of biological role, represses transcription of the divergently oriented tcmR and tcmA (tetracenomycin C resistance and export) genes by binding to an intergenic operator region. This binding is inhibited by tetracenomycin C. The sequence is that of HTH-type transcriptional regulator TcmR (tcmR) from Streptomyces glaucescens.